A 136-amino-acid chain; its full sequence is Ribosome-binding factor A (136 aa).

Residues 116 to 136 (AGNHKASDEEESDDKGHEDEQ) are disordered.

Belongs to the RbfA family. As to quaternary structure, monomer. Binds 30S ribosomal subunits, but not 50S ribosomal subunits or 70S ribosomes.

The protein resides in the cytoplasm. Its function is as follows. One of several proteins that assist in the late maturation steps of the functional core of the 30S ribosomal subunit. Associates with free 30S ribosomal subunits (but not with 30S subunits that are part of 70S ribosomes or polysomes). Required for efficient processing of 16S rRNA. May interact with the 5'-terminal helix region of 16S rRNA. The chain is Ribosome-binding factor A from Lachnoclostridium phytofermentans (strain ATCC 700394 / DSM 18823 / ISDg) (Clostridium phytofermentans).